The following is a 412-amino-acid chain: Peptidase T (412 aa).

Residue H81 coordinates Zn(2+). Residue D83 is part of the active site. Zn(2+) is bound at residue D144. E178 acts as the Proton acceptor in catalysis. Positions 179, 201, and 383 each coordinate Zn(2+).

Belongs to the peptidase M20B family. Requires Zn(2+) as cofactor.

It localises to the cytoplasm. It catalyses the reaction Release of the N-terminal residue from a tripeptide.. In terms of biological role, cleaves the N-terminal amino acid of tripeptides. The chain is Peptidase T from Bacillus cereus (strain ATCC 14579 / DSM 31 / CCUG 7414 / JCM 2152 / NBRC 15305 / NCIMB 9373 / NCTC 2599 / NRRL B-3711).